The chain runs to 363 residues: Beta-1,3-N-acetylglucosaminyltransferase lunatic fringe (363 aa).

The Cytoplasmic segment spans residues 1–8 (MLKSCGRK). A helical; Signal-anchor for type II membrane protein transmembrane segment spans residues 9 to 29 (LLLSLVGSMFTCLLVLMVEPP). Over 30–363 (GRPGLARGEA…TPWCPSNVVY (334 aa)) the chain is Lumenal. Substrate is bound at residue R113. N-linked (GlcNAc...) asparagine glycosylation occurs at N151. 2 cysteine pairs are disulfide-bonded: C152/C163 and C181/C244. Position 185 (D185) interacts with substrate. A Mn(2+)-binding site is contributed by D186. Residue D274 is part of the active site. H298 contributes to the Mn(2+) binding site. C348 and C357 are joined by a disulfide.

It belongs to the glycosyltransferase 31 family. It depends on Mn(2+) as a cofactor. Co(2+) serves as cofactor. Post-translationally, a soluble form may be derived from the membrane form by proteolytic processing.

It localises to the golgi apparatus membrane. The catalysed reaction is 3-O-(alpha-L-fucosyl)-L-threonyl-[EGF-like domain protein] + UDP-N-acetyl-alpha-D-glucosamine = 3-O-(N-acetyl-beta-D-glucosaminyl-(1-&gt;3)-alpha-L-fucosyl)-L-threonyl-[EGF-like domain protein] + UDP + H(+). The enzyme catalyses 3-O-(alpha-L-fucosyl)-L-seryl-[EGF-like domain protein] + UDP-N-acetyl-alpha-D-glucosamine = 3-O-(N-acetyl-beta-D-glucosaminyl-(1-&gt;3)-alpha-L-fucosyl)-L-seryl-[EGF-like domain protein] + UDP + H(+). Glycosyltransferase that initiates the elongation of O-linked fucose residues attached to EGF-like repeats in the extracellular domain of Notch molecules. Essential mediator of somite segmentation and patterning. The protein is Beta-1,3-N-acetylglucosaminyltransferase lunatic fringe (LFNG) of Gallus gallus (Chicken).